A 210-amino-acid chain; its full sequence is Imidazoleglycerol-phosphate dehydratase (210 aa).

The protein belongs to the imidazoleglycerol-phosphate dehydratase family.

It is found in the cytoplasm. It carries out the reaction D-erythro-1-(imidazol-4-yl)glycerol 3-phosphate = 3-(imidazol-4-yl)-2-oxopropyl phosphate + H2O. The protein operates within amino-acid biosynthesis; L-histidine biosynthesis; L-histidine from 5-phospho-alpha-D-ribose 1-diphosphate: step 6/9. In Mycobacterium bovis (strain ATCC BAA-935 / AF2122/97), this protein is Imidazoleglycerol-phosphate dehydratase.